Here is a 968-residue protein sequence, read N- to C-terminus: Glycine dehydrogenase (decarboxylating) (968 aa).

K713 carries the N6-(pyridoxal phosphate)lysine modification.

Belongs to the GcvP family. The glycine cleavage system is composed of four proteins: P, T, L and H. Pyridoxal 5'-phosphate is required as a cofactor.

The catalysed reaction is N(6)-[(R)-lipoyl]-L-lysyl-[glycine-cleavage complex H protein] + glycine + H(+) = N(6)-[(R)-S(8)-aminomethyldihydrolipoyl]-L-lysyl-[glycine-cleavage complex H protein] + CO2. In terms of biological role, the glycine cleavage system catalyzes the degradation of glycine. The P protein binds the alpha-amino group of glycine through its pyridoxal phosphate cofactor; CO(2) is released and the remaining methylamine moiety is then transferred to the lipoamide cofactor of the H protein. The polypeptide is Glycine dehydrogenase (decarboxylating) (Variovorax paradoxus (strain S110)).